The sequence spans 180 residues: N-terminal acetyltransferase B complex catalytic subunit naa20 (180 aa).

In terms of domain architecture, N-acetyltransferase spans 2–156; the sequence is TDTRKFKATD…DSFDMRKPLS (155 aa).

The protein belongs to the acetyltransferase family. Component of the N-terminal acetyltransferase B (NatB) complex.

It localises to the cytoplasm. The protein resides in the nucleus. The catalysed reaction is N-terminal L-methionyl-L-asparaginyl-[protein] + acetyl-CoA = N-terminal N(alpha)-acetyl-L-methionyl-L-asparaginyl-[protein] + CoA + H(+). The enzyme catalyses N-terminal L-methionyl-L-glutaminyl-[protein] + acetyl-CoA = N-terminal N(alpha)-acetyl-L-methionyl-L-glutaminyl-[protein] + CoA + H(+). It catalyses the reaction N-terminal L-methionyl-L-aspartyl-[protein] + acetyl-CoA = N-terminal N(alpha)-acetyl-L-methionyl-L-aspartyl-[protein] + CoA + H(+). It carries out the reaction N-terminal L-methionyl-L-glutamyl-[protein] + acetyl-CoA = N-terminal N(alpha)-acetyl-L-methionyl-L-glutamyl-[protein] + CoA + H(+). Catalytic subunit of the NatB N-terminal acetyltransferase, which catalyzes acetylation of the amino-terminal methionine residues of all proteins beginning with Met-Asp or Met-Glu and of some proteins beginning with Met-Asn, Met-Gln or Met-Met. This chain is N-terminal acetyltransferase B complex catalytic subunit naa20 (naa20), found in Schizosaccharomyces pombe (strain 972 / ATCC 24843) (Fission yeast).